The sequence spans 383 residues: Probable aspartate/prephenate aminotransferase (383 aa).

Positions 39, 125, and 175 each coordinate L-aspartate. Lys234 is modified (N6-(pyridoxal phosphate)lysine). Residue Arg361 coordinates L-aspartate.

This sequence belongs to the class-I pyridoxal-phosphate-dependent aminotransferase family. As to quaternary structure, homodimer. Pyridoxal 5'-phosphate is required as a cofactor.

Its subcellular location is the cytoplasm. It carries out the reaction L-aspartate + 2-oxoglutarate = oxaloacetate + L-glutamate. It catalyses the reaction L-arogenate + oxaloacetate = prephenate + L-aspartate. Functionally, catalyzes the reversible conversion of aspartate and 2-oxoglutarate to glutamate and oxaloacetate. Can also transaminate prephenate in the presence of aspartate. This is Probable aspartate/prephenate aminotransferase (aspC) from Thermus aquaticus.